The chain runs to 372 residues: NAD(P)H-quinone oxidoreductase subunit 1 (372 aa).

The next 8 helical transmembrane spans lie at 27 to 47 (LIWLPLPMLLVLTAAMVGVLV), 97 to 117 (LLFTLGPVLVLVPVILSWLIV), 128 to 148 (VGIGIFLWISLSSIQPIGLLM), 166 to 186 (AAQSISYEIPLALAVLAVVMM), 204 to 224 (LLSWNVWRQPVGFLIFWICAL), 266 to 286 (VLSSLLVAVLYLGGWGFPIPV), 308 to 328 (SVGIVMTVLKAYLLVFLAILL), and 347 to 367 (FLLPIALGNLLITAALKLAFP).

This sequence belongs to the complex I subunit 1 family. NDH-1 is composed of at least 11 different subunits.

It localises to the cellular thylakoid membrane. The enzyme catalyses a plastoquinone + NADH + (n+1) H(+)(in) = a plastoquinol + NAD(+) + n H(+)(out). It carries out the reaction a plastoquinone + NADPH + (n+1) H(+)(in) = a plastoquinol + NADP(+) + n H(+)(out). Functionally, NDH-1 shuttles electrons from an unknown electron donor, via FMN and iron-sulfur (Fe-S) centers, to quinones in the respiratory and/or the photosynthetic chain. The immediate electron acceptor for the enzyme in this species is believed to be plastoquinone. Couples the redox reaction to proton translocation, and thus conserves the redox energy in a proton gradient. The protein is NAD(P)H-quinone oxidoreductase subunit 1 of Prochlorococcus marinus (strain MIT 9313).